A 288-amino-acid polypeptide reads, in one-letter code: Pantothenate synthetase (288 aa).

30-37 (MGNLHNGH) provides a ligand contact to ATP. His37 functions as the Proton donor in the catalytic mechanism. Residue Gln61 participates in (R)-pantoate binding. Gln61 provides a ligand contact to beta-alanine. Residue 149 to 152 (GQKD) participates in ATP binding. Gln155 contacts (R)-pantoate. Residues Val178 and 186 to 189 (LSSR) each bind ATP.

It belongs to the pantothenate synthetase family. Homodimer.

The protein localises to the cytoplasm. It catalyses the reaction (R)-pantoate + beta-alanine + ATP = (R)-pantothenate + AMP + diphosphate + H(+). Its pathway is cofactor biosynthesis; (R)-pantothenate biosynthesis; (R)-pantothenate from (R)-pantoate and beta-alanine: step 1/1. Its function is as follows. Catalyzes the condensation of pantoate with beta-alanine in an ATP-dependent reaction via a pantoyl-adenylate intermediate. The protein is Pantothenate synthetase of Tolumonas auensis (strain DSM 9187 / NBRC 110442 / TA 4).